A 183-amino-acid chain; its full sequence is TATA box-binding protein-like 1 (183 aa).

This sequence belongs to the TBP family. In terms of assembly, binds TFIIA and TFIIB. In terms of tissue distribution, present in the brain, heart, liver and gizzard.

The protein localises to the cytoplasm. It localises to the nucleus. Part of a specialized transcription system that mediates the transcription of most ribosomal proteins through the 5'-TCT-3' motif which is a core promoter element at these genes. Seems to also mediate the transcription of NF1. Does not bind the TATA box. In Gallus gallus (Chicken), this protein is TATA box-binding protein-like 1 (TBPL1).